The primary structure comprises 325 residues: DNA-directed RNA polymerase subunit alpha (325 aa).

Positions 1–231 are alpha N-terminal domain (alpha-NTD); that stretch reads MQTSLLKPKI…DQLSVFAALE (231 aa). Positions 246 to 325 are alpha C-terminal domain (alpha-CTD); sequence IDPILLRPVD…ENWPPAGLDK (80 aa).

It belongs to the RNA polymerase alpha chain family. In terms of assembly, homodimer. The RNAP catalytic core consists of 2 alpha, 1 beta, 1 beta' and 1 omega subunit. When a sigma factor is associated with the core the holoenzyme is formed, which can initiate transcription.

The catalysed reaction is RNA(n) + a ribonucleoside 5'-triphosphate = RNA(n+1) + diphosphate. Its function is as follows. DNA-dependent RNA polymerase catalyzes the transcription of DNA into RNA using the four ribonucleoside triphosphates as substrates. The chain is DNA-directed RNA polymerase subunit alpha from Burkholderia orbicola (strain MC0-3).